Reading from the N-terminus, the 148-residue chain is uncharacterized protein (148 aa).

The region spanning 8–148 (QVMQEPELKI…DGFLTLILRN (141 aa)) is the N-acetyltransferase domain.

Belongs to the acetyltransferase family.

This is an uncharacterized protein from Bacillus subtilis (strain 168).